Consider the following 228-residue polypeptide: Uracil-DNA glycosylase (228 aa).

The active-site Proton acceptor is the Asp-64.

This sequence belongs to the uracil-DNA glycosylase (UDG) superfamily. UNG family.

Its subcellular location is the cytoplasm. The enzyme catalyses Hydrolyzes single-stranded DNA or mismatched double-stranded DNA and polynucleotides, releasing free uracil.. In terms of biological role, excises uracil residues from the DNA which can arise as a result of misincorporation of dUMP residues by DNA polymerase or due to deamination of cytosine. This Yersinia pseudotuberculosis serotype IB (strain PB1/+) protein is Uracil-DNA glycosylase.